A 161-amino-acid chain; its full sequence is Dihydrofolate reductase type 1 from Tn4003 (161 aa).

The DHFR domain maps to 2–157 (TLSIIVAHDK…IPHTFLHLVR (156 aa)). 6–8 (IVA) provides a ligand contact to substrate. Residues 7 to 8 (VA) and 15 to 20 (IGYQNQ) contribute to the NADP(+) site. Residue D28 coordinates substrate. 44–47 (ARKT) contacts NADP(+). Residue R58 coordinates substrate. NADP(+) contacts are provided by residues 63–66 (LTNQ) and 93–98 (FGGQTL). Residue T112 participates in substrate binding.

Belongs to the dihydrofolate reductase family.

The catalysed reaction is (6S)-5,6,7,8-tetrahydrofolate + NADP(+) = 7,8-dihydrofolate + NADPH + H(+). It functions in the pathway cofactor biosynthesis; tetrahydrofolate biosynthesis; 5,6,7,8-tetrahydrofolate from 7,8-dihydrofolate: step 1/1. Functionally, key enzyme in folate metabolism. Catalyzes an essential reaction for de novo glycine and purine synthesis, and for DNA precursor synthesis. This Staphylococcus aureus protein is Dihydrofolate reductase type 1 from Tn4003 (dfrA).